The chain runs to 1028 residues: Receptor-type guanylate cyclase gcy-13 (1028 aa).

6 N-linked (GlcNAc...) asparagine glycosylation sites follow: Asn-58, Asn-156, Asn-324, Asn-337, Asn-377, and Asn-394. A helical transmembrane segment spans residues 438–458 (IVVIVAVIIVLCCAAAAIAAF). The Cytoplasmic portion of the chain corresponds to 459 to 1028 (LVIKARRDEE…WLLGMKEESA (570 aa)). Residues 491-511 (ESHHSSRSLQSNSTTTTGTTG) form a disordered region. Residues 497–511 (RSLQSNSTTTTGTTG) show a composition bias toward low complexity. The region spanning 499–770 (LQSNSTTTTG…DMVNKLMKNM (272 aa)) is the Protein kinase domain. A coiled-coil region spans residues 786–817 (SVLEKHASSLEDEVQERMKELVEEKKKSDILL). The region spanning 844-974 (TIFFSDVVGF…DTVNTASRME (131 aa)) is the Guanylate cyclase domain.

The protein belongs to the adenylyl cyclase class-4/guanylyl cyclase family. Expressed bilaterally in RIM interneurons.

The protein resides in the cell membrane. The enzyme catalyses GTP = 3',5'-cyclic GMP + diphosphate. Functionally, guanylate cyclase involved in the production of the second messenger cGMP. This Caenorhabditis elegans protein is Receptor-type guanylate cyclase gcy-13.